The following is a 260-amino-acid chain: Resolvase (260 aa).

A Tyr recombinase domain is found at 38-241; sequence ELPKYLLAPE…FALDVAARHR (204 aa). Residues Arg73, Lys105, His193, Arg196, and His219 contribute to the active site. Residue Tyr228 is the O-(3'-phospho-DNA)-tyrosine intermediate of the active site.

It belongs to the 'phage' integrase family.

In terms of biological role, this resolvase acts at the RfsF equivalent resolution sequence of pColBM-CL139. The polypeptide is Resolvase (resD) (Escherichia coli).